We begin with the raw amino-acid sequence, 203 residues long: Small ribosomal subunit protein uS5 (203 aa).

Positions 51–114 (LEDEVLDITM…ENAKLNVVRI (64 aa)) constitute an S5 DRBM domain.

It belongs to the universal ribosomal protein uS5 family. Part of the 30S ribosomal subunit. Contacts protein S4.

Its function is as follows. With S4 and S12 plays an important role in translational accuracy. The sequence is that of Small ribosomal subunit protein uS5 from Methanothrix thermoacetophila (strain DSM 6194 / JCM 14653 / NBRC 101360 / PT) (Methanosaeta thermophila).